We begin with the raw amino-acid sequence, 457 residues long: Putative hexose transporter 12 (457 aa).

The Cytoplasmic segment spans residues 1–2 (MG). A helical transmembrane segment spans residues 3–23 (LIVSIFNIGCAIGGIVLSKVG). The Extracellular portion of the chain corresponds to 24-29 (DIYGRR). The helical transmembrane segment at 30-50 (IGLITVTAIYVVGILIQITSI) threads the bilayer. The Cytoplasmic segment spans residues 51 to 60 (NKWYQYFIGR). Residues 61 to 81 (IISGIGVGGIAVLSPMLISEV) traverse the membrane as a helical segment. At 82 to 87 (APKHIR) the chain is on the extracellular side. The helical transmembrane segment at 88 to 108 (GTLVQLYQLMGTMGIFLGYCT) threads the bilayer. Over 109 to 122 (NYGTKNYHNATQWR) the chain is Cytoplasmic. A helical transmembrane segment spans residues 123–143 (VGLGLCFAWATFMVSGMMFVP). The Extracellular segment spans residues 144 to 247 (ESPRYLIEVG…KSVGLKDSFQ (104 aa)). Residue asparagine 194 is glycosylated (N-linked (GlcNAc...) asparagine). A helical membrane pass occupies residues 248 to 268 (TSIIIGVVNFFSSFIAVYTIE). The Cytoplasmic segment spans residues 269–274 (RFGRRT). The chain crosses the membrane as a helical span at residues 275 to 295 (CLLWGAASMLCCFAVFASVGV). The Extracellular segment spans residues 296 to 319 (TKLWPQGSSHQDITSQGAGNCMIV). A helical membrane pass occupies residues 320–340 (FTMFFIFSFATTWAGGCFVIV). The Cytoplasmic segment spans residues 341–353 (SETFPLRAKSRGM). Residues 354 to 374 (AIATAANWMWGFLISFFTPFI) form a helical membrane-spanning segment. The Extracellular portion of the chain corresponds to 375-379 (TGAIN). The helical transmembrane segment at 380–400 (FYYGYVFLGCLVFAYFYVFFF) threads the bilayer. Over 401 to 457 (VPETKGLTLEEVNTMWLEGVPAWKSASWVPPERRTADYDADAIDHDNRPIYKRFFSS) the chain is Cytoplasmic.

This sequence belongs to the major facilitator superfamily. Sugar transporter (TC 2.A.1.1) family.

It is found in the membrane. Its function is as follows. Probable glucose transporter. The protein is Putative hexose transporter 12 (HXT12) of Saccharomyces cerevisiae (strain ATCC 204508 / S288c) (Baker's yeast).